A 508-amino-acid polypeptide reads, in one-letter code: UTP--glucose-1-phosphate uridylyltransferase (508 aa).

Ser-13 is subject to Phosphoserine. UTP-binding positions include 113 to 116 (LNGG), Lys-127, Gln-190, and Gly-222. Substrate is bound at residue 115 to 116 (GG). Lys-127 serves as a coordination point for Mg(2+). Substrate is bound by residues His-223 and 251–253 (NID). UTP is bound by residues Asp-253 and Lys-396. Residue Asp-253 participates in Mg(2+) binding. The active site involves Lys-396. At Thr-426 the chain carries Phosphothreonine. A Phosphoserine modification is found at Ser-434. Lys-438 bears the N6-acetyllysine mark. Phosphoserine is present on residues Ser-448 and Ser-461. The segment at 457–508 (HLTVSGDVTFGKNVSLKGTVIIIANHGDRIDIPPGAVLENKIVSGNLRILDH) is oligomerization. Residues 502–503 (NL) form a critical for end-to-end subunit interaction region.

It belongs to the UDPGP type 1 family. As to quaternary structure, homooctamer.

The protein localises to the cytoplasm. The enzyme catalyses alpha-D-glucose 1-phosphate + UTP + H(+) = UDP-alpha-D-glucose + diphosphate. It functions in the pathway glycan biosynthesis; glycogen biosynthesis. In terms of biological role, UTP--glucose-1-phosphate uridylyltransferase catalyzing the conversion of glucose-1-phosphate into UDP-glucose, a crucial precursor for the production of glycogen. The protein is UTP--glucose-1-phosphate uridylyltransferase (Ugp2) of Mus musculus (Mouse).